Consider the following 301-residue polypeptide: Glycine--tRNA ligase alpha subunit (301 aa).

This sequence belongs to the class-II aminoacyl-tRNA synthetase family. Tetramer of two alpha and two beta subunits.

Its subcellular location is the cytoplasm. It catalyses the reaction tRNA(Gly) + glycine + ATP = glycyl-tRNA(Gly) + AMP + diphosphate. The polypeptide is Glycine--tRNA ligase alpha subunit (Shewanella amazonensis (strain ATCC BAA-1098 / SB2B)).